We begin with the raw amino-acid sequence, 196 residues long: Pyridoxal 5'-phosphate synthase subunit PdxT (196 aa).

L-glutamine is bound at residue 47–49 (GES). The Nucleophile role is filled by C79. L-glutamine contacts are provided by residues R106 and 134 to 135 (IR). Residues H170 and E172 each act as charge relay system in the active site.

Belongs to the glutaminase PdxT/SNO family. In the presence of PdxS, forms a dodecamer of heterodimers. Only shows activity in the heterodimer.

It catalyses the reaction aldehydo-D-ribose 5-phosphate + D-glyceraldehyde 3-phosphate + L-glutamine = pyridoxal 5'-phosphate + L-glutamate + phosphate + 3 H2O + H(+). The enzyme catalyses L-glutamine + H2O = L-glutamate + NH4(+). Its pathway is cofactor biosynthesis; pyridoxal 5'-phosphate biosynthesis. In terms of biological role, catalyzes the hydrolysis of glutamine to glutamate and ammonia as part of the biosynthesis of pyridoxal 5'-phosphate. The resulting ammonia molecule is channeled to the active site of PdxS. The protein is Pyridoxal 5'-phosphate synthase subunit PdxT of Bacillus velezensis (strain DSM 23117 / BGSC 10A6 / LMG 26770 / FZB42) (Bacillus amyloliquefaciens subsp. plantarum).